Reading from the N-terminus, the 349-residue chain is Isopentenyl-diphosphate delta-isomerase (349 aa).

6–7 contacts substrate; sequence RK. Residues 62–64, serine 93, and asparagine 122 contribute to the FMN site; that span reads AMT. Glutamine 152 provides a ligand contact to substrate. Glutamate 153 is a binding site for Mg(2+). FMN-binding positions include lysine 184, threonine 214, 258-259, and 280-281; these read GG and AG.

The protein belongs to the IPP isomerase type 2 family. Homooctamer. Dimer of tetramers. It depends on FMN as a cofactor. The cofactor is NADPH. Mg(2+) serves as cofactor.

The protein resides in the cytoplasm. The enzyme catalyses isopentenyl diphosphate = dimethylallyl diphosphate. Functionally, involved in the biosynthesis of isoprenoids. Catalyzes the 1,3-allylic rearrangement of the homoallylic substrate isopentenyl (IPP) to its allylic isomer, dimethylallyl diphosphate (DMAPP). In Bacillus thuringiensis subsp. konkukian (strain 97-27), this protein is Isopentenyl-diphosphate delta-isomerase.